The sequence spans 200 residues: Serine/threonine-protein kinase mos (200 aa).

Residues L2 to A200 form the Protein kinase domain. ATP contacts are provided by residues L8–V16 and K29. D143 serves as the catalytic Proton acceptor.

The protein belongs to the protein kinase superfamily. Ser/Thr protein kinase family.

It catalyses the reaction L-seryl-[protein] + ATP = O-phospho-L-seryl-[protein] + ADP + H(+). The catalysed reaction is L-threonyl-[protein] + ATP = O-phospho-L-threonyl-[protein] + ADP + H(+). The sequence is that of Serine/threonine-protein kinase mos (MOS) from Nycticorax nycticorax (Black-crowned night-heron).